The primary structure comprises 1742 residues: NACHT and WD repeat domain-containing protein 2 (1742 aa).

5 LRR repeats span residues 386–410, 677–698, 724–747, 883–906, and 925–953; these read FYEYKCESLNILHKYILPSKTGHIN, LEDVLALDNSVMNELNENTRPS, VKNVTLLVWANRHLQLIAQKLYLQ, YSQEKELKFLASTLRSIRNKVIAF, and LPKLRHLLLECDKDGPKYCSIVPLHSSMD. The NACHT domain maps to 410–737; sequence NPLVVYGGPC…TLLVWANRHL (328 aa). WD repeat units follow at residues 963 to 1004, 1007 to 1046, 1140 to 1179, 1229 to 1271, 1272 to 1311, 1314 to 1353, 1355 to 1394, 1396 to 1434, 1476 to 1516, 1522 to 1561, and 1614 to 1653; these read LASS…LLRQ, TAQSVILGMKLSSDEKYLVVATTNNTLLIYDNVNSCLLSE, FSGGFVKFLLILDTAQEMVMVDSEGSLSVWNTEDISNPQL, RHNE…ASLQ, ESSGTIVKLVKSSHHNMLLSLSTSGVLSIWDIDIITAMSN, KTGKPIQSLVLPARGEIIYSLDGSDCVHKWNFSSGFIEAV, KHEGIVEHCVLTSTGDLMVTSDDKSSQYVWHTSSGENLFR, NGQRISQLLITHNDQFVVSLCEENASRVWRLATGHRVCN, EDGI…ICRR, NFLKNLEDFEISPNGKLGIISRGDENINVLDLHSGKLRVV, and SLYKTPTFLALSQRHLNIIVGFDDGSIGIYTVVDRVDAAL. Residues 1702–1721 are disordered; sequence PITVSDSSESNEATPSKKHN. A compositionally biased stretch (polar residues) spans 1703-1715; it reads ITVSDSSESNEAT.

The sequence is that of NACHT and WD repeat domain-containing protein 2 (Nwd2) from Mus musculus (Mouse).